The following is a 174-amino-acid chain: Ribosome maturation factor RimM (174 aa).

Residues 96-170 (PDEFYDHELE…YVVIDPPEGL (75 aa)) form the PRC barrel domain.

The protein belongs to the RimM family. Binds ribosomal protein uS19.

The protein resides in the cytoplasm. Its function is as follows. An accessory protein needed during the final step in the assembly of 30S ribosomal subunit, possibly for assembly of the head region. Essential for efficient processing of 16S rRNA. May be needed both before and after RbfA during the maturation of 16S rRNA. It has affinity for free ribosomal 30S subunits but not for 70S ribosomes. This Nocardia farcinica (strain IFM 10152) protein is Ribosome maturation factor RimM.